The following is a 395-amino-acid chain: Phosphoserine aminotransferase (395 aa).

Phosphothreonine is present on threonine 20. 80–81 contributes to the pyridoxal 5'-phosphate binding site; it reads GT. Serine 112 carries the phosphoserine modification. Positions 113, 170, 194, and 217 each coordinate pyridoxal 5'-phosphate. The residue at position 218 (lysine 218) is an N6-(pyridoxal phosphate)lysine. 271-272 contacts pyridoxal 5'-phosphate; the sequence is NT.

Belongs to the class-V pyridoxal-phosphate-dependent aminotransferase family. SerC subfamily. In terms of assembly, homodimer. It depends on pyridoxal 5'-phosphate as a cofactor.

It carries out the reaction O-phospho-L-serine + 2-oxoglutarate = 3-phosphooxypyruvate + L-glutamate. The enzyme catalyses 4-(phosphooxy)-L-threonine + 2-oxoglutarate = (R)-3-hydroxy-2-oxo-4-phosphooxybutanoate + L-glutamate. It functions in the pathway amino-acid biosynthesis; L-serine biosynthesis; L-serine from 3-phospho-D-glycerate: step 2/3. In terms of biological role, phosphoserine aminotransferase (PSAT) is a pyridoxal 5'-phosphate-dependent enzyme involved in the second step of the phosphorylated pathway of serine biosynthesis. Catalyzes the reversible conversion of 3-phosphohydroxypyruvate to phosphoserine and of 3-hydroxy-2-oxo-4-phosphonooxybutanoate to phosphohydroxythreonine. Plays an indirect role in purine biosynthesis. This chain is Phosphoserine aminotransferase, found in Saccharomyces cerevisiae (strain ATCC 204508 / S288c) (Baker's yeast).